The chain runs to 507 residues: ATP-dependent RNA helicase DDX47 (507 aa).

Residues 1–31 show a composition bias toward acidic residues; it reads MSETSEDEQTQLQTSDEEEDLGSEEEQEDED. The disordered stretch occupies residues 1–58; sequence MSETSEDEQTQLQTSDEEEDLGSEEEQEDEDNNHKEGDSEAALSGEDDKGSEDDAAEE. A Q motif motif is present at residues 61 to 89; it reads LTWKDLGLNEALCQACDELKWKAPSKIQR. Positions 92–263 constitute a Helicase ATP-binding domain; that stretch reads IPVALQGKDV…RASLKDPVKV (172 aa). An ATP-binding site is contributed by 105–112; sequence AETGSGKT. Positions 211–214 match the DEAD box motif; it reads DEAD. Positions 290 to 434 constitute a Helicase C-terminal domain; it reads YLVHILNELA…LYKCEEDEVM (145 aa). The stretch at 426 to 453 forms a coiled coil; sequence YKCEEDEVMALQERVAEAQRTAKLELKD. The segment covering 451 to 471 has biased composition (basic and acidic residues); the sequence is LKDLEDTRGGHKRGGDTHDDS. Residues 451–507 are disordered; that stretch reads LKDLEDTRGGHKRGGDTHDDSENFTGARKRMKPMGGTGGGGRKSFGKKNWSKGKQKR. A compositionally biased stretch (basic residues) spans 494–507; sequence SFGKKNWSKGKQKR.

It belongs to the DEAD box helicase family. DDX47/RRP3 subfamily.

The protein localises to the nucleus. It is found in the nucleolus. It carries out the reaction ATP + H2O = ADP + phosphate + H(+). Part of a translational control module, also containing ath/DHX33 and ais/DDX52, which coordinates germline stem cell differentiation with ribosome biogenesis during oogenesis. This module allows for coregulation of ribosomal proteins and non1/GTPBP4, a p53 repressor, preventing p53 stabilization, cell cycle arrest and loss of stem cell differentiation. With atos, adjusts transcription and translation of a subset of OXPHOS genes in macrophages to increase mitochondrial bioenergetics and allow tissue invasion. This Drosophila melanogaster (Fruit fly) protein is ATP-dependent RNA helicase DDX47.